Reading from the N-terminus, the 316-residue chain is Calumenin-B (316 aa).

Positions 1 to 19 (MELRPLVMCFALCVVYASS) are cleaved as a signal peptide. EF-hand domains are found at residues 69 to 104 (ESKE…SQKR), 105 to 140 (WIYD…YILD), 152 to 187 (QMIS…EEYD), 189 to 224 (MKDI…QEGD), 230 to 265 (WVRT…SDYD), and 266 to 301 (HAEA…FVGS). Positions 82, 84, 86, 88, 93, 118, 120, 122, and 129 each coordinate Ca(2+). N-linked (GlcNAc...) asparagine glycosylation occurs at N132. Ca(2+)-binding residues include D165, D167, D169, K171, E176, D202, N204, D206, E213, D243, N245, D247, R249, E254, D279, D281, D283, K285, and E290. The short motif at 313–316 (HDEF) is the Prevents secretion from ER element.

Belongs to the CREC family. As to quaternary structure, interacts with ggcx.

The protein resides in the endoplasmic reticulum membrane. It is found in the golgi apparatus. It localises to the secreted. The protein localises to the melanosome. Its subcellular location is the sarcoplasmic reticulum lumen. Functionally, involved in regulation of vitamin K-dependent carboxylation of multiple N-terminal glutamate residues. Seems to inhibit gamma-carboxylase ggcx. Binds 7 calcium ions with a low affinity. This Salmo salar (Atlantic salmon) protein is Calumenin-B (calub).